The sequence spans 423 residues: Lysosomal acid phosphatase (423 aa).

Residues 1–30 (MAGRQSGWSQAALLQFLLGMCLMVMPPIQA) form the signal peptide. The Lumenal segment spans residues 31-380 (RSLRFVTLLY…QLASDTADTE (350 aa)). The active-site Nucleophile is the H42. N-linked (GlcNAc...) asparagine glycosylation is found at N92, N133, N167, N177, N191, N197, and N267. Disulfide bonds link C159–C370, C212–C310, and C345–C349. The Proton donor role is filled by D287. N322 and N331 each carry an N-linked (GlcNAc...) asparagine glycan. The helical transmembrane segment at 381–401 (VIVALAVCGSILFLLIVLLLT) threads the bilayer. Over 402-423 (VLFRMQAQPPGYHHVADREDHA) the chain is Cytoplasmic.

Belongs to the histidine acid phosphatase family. Post-translationally, the membrane-bound form is converted to the soluble form by sequential proteolytic processing. First, the C-terminal cytoplasmic tail is removed. Cleavage by a lysosomal protease releases the soluble form in the lysosome lumen.

It is found in the lysosome membrane. The protein localises to the lysosome lumen. It catalyses the reaction a phosphate monoester + H2O = an alcohol + phosphate. The protein is Lysosomal acid phosphatase (Acp2) of Rattus norvegicus (Rat).